Reading from the N-terminus, the 561-residue chain is uncharacterized protein (561 aa).

The next 6 membrane-spanning stretches (helical) occupy residues 10 to 29, 34 to 56, 63 to 80, 95 to 117, 122 to 144, and 164 to 186; these read LLRN…GYWI, FGSL…SQIG, LKTV…FQSG, VLMA…RMFH, LAAG…SSAL, and GYAV…ILPW. RCK C-terminal domains are found at residues 205 to 287 and 294 to 376; these read QGMA…LLGE and HDMD…ELGS. A run of 5 helical transmembrane segments spans residues 386–403, 407–429, 442–464, 479–501, and 538–560; these read LVFH…GLIV, GSIP…FGWY, AAST…LQTG, FMLG…RYVL, and SFAI…VVAF.

This sequence belongs to the AAE transporter (TC 2.A.81) family.

The protein localises to the cell membrane. This is an uncharacterized protein from Zymomonas mobilis subsp. mobilis (strain ATCC 31821 / ZM4 / CP4).